Consider the following 481-residue polypeptide: Thyroid receptor-interacting protein 6 (481 aa).

Over residues 1–12 (MSGPTWLPPKQP) the composition is skewed to pro residues. Residues 1-259 (MSGPTWLPPK…QVPLSQPPEE (259 aa)) form a disordered region. Arginine 25 carries the post-translational modification Asymmetric dimethylarginine; alternate. Omega-N-methylarginine; alternate is present on arginine 25. Tyrosine 55 bears the Phosphotyrosine; by SRC mark. The residue at position 92 (serine 92) is a Phosphoserine. The span at 108–122 (DGGRGHAPRRPDRQA) shows a compositional bias: basic and acidic residues. Arginine 111 is subject to Omega-N-methylarginine. Composition is skewed to low complexity over residues 153-173 (SPYG…AGPA) and 183-193 (PVRGCGPPRRG). Arginine 185 and arginine 192 each carry omega-N-methylarginine. Serine 195 carries the phosphoserine modification. An Omega-N-methylarginine modification is found at arginine 211. The segment covering 221 to 233 (SHREPGPGVKEEA) has biased composition (basic and acidic residues). Arginine 243 carries the post-translational modification Omega-N-methylarginine. The residue at position 254 (serine 254) is a Phosphoserine. 3 consecutive LIM zinc-binding domains span residues 284 to 321 (CGGC…QLRG), 344 to 403 (CSTC…FAPR), and 404 to 472 (CSVC…RIQE). Residues 474–481 (SATVTTDC) form an interaction with MAGI1 and PTPN13 region.

It belongs to the zyxin/ajuba family. In terms of assembly, specifically interacts with the ligand binding domain of the thyroid receptor (TR) in the presence of thyroid hormone. Interacts (via the third LIM domain and C-terminus) with PTPN13 (via the second PDZ domain). Interacts (via the second LIM domain or via the third LIM domain plus C-terminus) with PDLIM4 (via PDZ domain). Found in a complex with PTPN13 and PDLIM4. Interacts with SVIL isoform 2. Interacts with LPAR2 but not other LPA receptors. Interacts with PRKAA2. Interacts with MAGI1. Interacts with SCRIB. In terms of processing, phosphorylation at Tyr-55 by SRC is required for enhancement of lysophosphatidic acid-induced cell migration. Tyr-55 is dephosphorylated by PTPN13.

It is found in the cytoplasm. The protein resides in the cytoskeleton. The protein localises to the cell junction. Its subcellular location is the focal adhesion. It localises to the nucleus. Functionally, relays signals from the cell surface to the nucleus to weaken adherens junction and promote actin cytoskeleton reorganization and cell invasiveness. Involved in lysophosphatidic acid-induced cell adhesion and migration. Acts as a transcriptional coactivator for NF-kappa-B and JUN, and mediates the transrepression of these transcription factors induced by glucocorticoid receptor. This Bos taurus (Bovine) protein is Thyroid receptor-interacting protein 6 (TRIP6).